Reading from the N-terminus, the 64-residue chain is Large ribosomal subunit protein uL29 (64 aa).

Belongs to the universal ribosomal protein uL29 family.

The chain is Large ribosomal subunit protein uL29 from Cupriavidus metallidurans (strain ATCC 43123 / DSM 2839 / NBRC 102507 / CH34) (Ralstonia metallidurans).